The chain runs to 900 residues: Alanine--tRNA ligase (900 aa).

His568, His572, Cys672, and His676 together coordinate Zn(2+).

It belongs to the class-II aminoacyl-tRNA synthetase family. The cofactor is Zn(2+).

Its subcellular location is the cytoplasm. It catalyses the reaction tRNA(Ala) + L-alanine + ATP = L-alanyl-tRNA(Ala) + AMP + diphosphate. In terms of biological role, catalyzes the attachment of alanine to tRNA(Ala) in a two-step reaction: alanine is first activated by ATP to form Ala-AMP and then transferred to the acceptor end of tRNA(Ala). Also edits incorrectly charged Ser-tRNA(Ala) and Gly-tRNA(Ala) via its editing domain. The sequence is that of Alanine--tRNA ligase from Mycoplasma genitalium (strain ATCC 33530 / DSM 19775 / NCTC 10195 / G37) (Mycoplasmoides genitalium).